The chain runs to 274 residues: Tyrosinase (274 aa).

Residues His38, His54, His63, His190, His194, and His216 each coordinate Cu cation.

Belongs to the tyrosinase family. It depends on Cu(2+) as a cofactor.

The catalysed reaction is 2 L-dopa + O2 = 2 L-dopaquinone + 2 H2O. The enzyme catalyses L-tyrosine + O2 = L-dopaquinone + H2O. Its function is as follows. This is a copper-containing oxidase that functions in the formation of pigments such as melanins and other polyphenolic compounds. The polypeptide is Tyrosinase (melC2) (Streptomyces glaucescens).